A 305-amino-acid polypeptide reads, in one-letter code: Putative UDP-glucose 4-epimerase (305 aa).

NAD(+)-binding positions include 10–11, 30–35, 50–51, and 71–75; these read FI, DNLTTG, DI, and QAAQI. Positions 115 and 140 each coordinate substrate. Y140 and K144 together coordinate NAD(+). The active-site Proton acceptor is Y140. Residues N169, 183 to 184, 198 to 200, R207, and 263 to 266 contribute to the substrate site; these read VI, IIF, and REGE.

It belongs to the NAD(P)-dependent epimerase/dehydratase family. NAD(+) serves as cofactor.

It carries out the reaction UDP-alpha-D-glucose = UDP-alpha-D-galactose. It participates in carbohydrate metabolism; galactose metabolism. In terms of biological role, involved in the metabolism of galactose. Catalyzes the conversion of UDP-galactose (UDP-Gal) to UDP-glucose (UDP-Glc) through a mechanism involving the transient reduction of NAD. The sequence is that of Putative UDP-glucose 4-epimerase from Methanocaldococcus jannaschii (strain ATCC 43067 / DSM 2661 / JAL-1 / JCM 10045 / NBRC 100440) (Methanococcus jannaschii).